The chain runs to 390 residues: MLPLSIKDDEYKPPKFNLVRKVSGWIRSIFSDTTSRNLFCFLCLNLSFAFVELFYGIWSNSLGLISDSFHMFFDCTALLAGLAASVISRWKTNEAFSYGYVRAEVLAGFVNGLFLIFTAFFIFSEGIERALDTPEVHHERLLPVSILGFLVNLIGIFVFQHGGGHGHSHESGHGHSHSLFNGSLSHGHSHSHGGSHGHSHGGGHGHSHSHGEGHGHSHDQSHKHGHGYGSSCHDEPPEEHTGSSKQILEGVFLHIVADALGSVGVIISTILMQRYGLMIADPICSMLIALLIFVSVIPLLKQSIGILMQRTPPSLDHVLPQCYQRVQQLQGVYHLQEPHFWTLCTDVYIGTLKLVIGPEADARWILSQTHNIFTQAGVRQLYVQIDMAAM.

The Cytoplasmic portion of the chain corresponds to 1–37 (MLPLSIKDDEYKPPKFNLVRKVSGWIRSIFSDTTSRN). A helical membrane pass occupies residues 38–58 (LFCFLCLNLSFAFVELFYGIW). Over 59–67 (SNSLGLISD) the chain is Lumenal. A helical membrane pass occupies residues 68 to 88 (SFHMFFDCTALLAGLAASVIS). Topologically, residues 89–102 (RWKTNEAFSYGYVR) are cytoplasmic. The helical transmembrane segment at 103-123 (AEVLAGFVNGLFLIFTAFFIF) threads the bilayer. Topologically, residues 124-140 (SEGIERALDTPEVHHER) are lumenal. A helical transmembrane segment spans residues 141-161 (LLPVSILGFLVNLIGIFVFQH). Positions 161 to 226 (HGGGHGHSHE…SHDQSHKHGH (66 aa)) are his-rich loop. Residues 162 to 250 (GGGHGHSHES…TGSSKQILEG (89 aa)) lie on the Cytoplasmic side of the membrane. The disordered stretch occupies residues 167–243 (HSHESGHGHS…DEPPEEHTGS (77 aa)). Low complexity predominate over residues 177–186 (HSLFNGSLSH). The segment covering 187 to 208 (GHSHSHGGSHGHSHGGGHGHSH) has biased composition (basic residues). Composition is skewed to basic and acidic residues over residues 209–222 (SHGE…DQSH) and 232–242 (CHDEPPEEHTG). Residues 251 to 271 (VFLHIVADALGSVGVIISTIL) traverse the membrane as a helical segment. Topologically, residues 272 to 276 (MQRYG) are lumenal. Residues 277–297 (LMIADPICSMLIALLIFVSVI) traverse the membrane as a helical segment. Topologically, residues 298–390 (PLLKQSIGIL…LYVQIDMAAM (93 aa)) are cytoplasmic.

The protein belongs to the cation diffusion facilitator (CDF) transporter (TC 2.A.4) family. SLC30A subfamily. As to quaternary structure, homooligomer.

It localises to the golgi apparatus membrane. Its subcellular location is the cytoplasmic vesicle. It is found in the golgi apparatus. The protein localises to the trans-Golgi network. The protein resides in the sarcoplasmic reticulum. It localises to the mitochondrion. The enzyme catalyses Zn(2+)(in) = Zn(2+)(out). Zinc ion transporter mediating zinc entry from the cytosol into the lumen of organelles along the secretory pathway. By contributing to zinc ion homeostasis within the early secretory pathway, regulates the activation and folding of enzymes like alkaline phosphatases. This chain is Zinc transporter 7 (slc30a7), found in Xenopus tropicalis (Western clawed frog).